Here is a 256-residue protein sequence, read N- to C-terminus: Major prion protein (256 aa).

The signal sequence occupies residues Met-1 to Cys-24. An interaction with GRB2, ERI3 and SYN1 region spans residues Lys-25–Ala-233. The segment at Pro-28–Thr-110 is disordered. Tandem repeats lie at residues Pro-54–Gln-62, Pro-63–Gln-70, Pro-71–Gln-78, Pro-79–Gln-86, and Pro-87–Gln-95. Residues Pro-54–Gln-95 are 5 X 8 AA tandem repeats of P-H-G-G-G-W-G-Q. A compositionally biased stretch (gly residues) spans Gln-55–Gly-97. Cu(2+)-binding residues include His-64, Gly-65, Gly-66, His-72, Gly-73, Gly-74, His-80, Gly-81, Gly-82, His-88, Gly-90, and Gly-91. A disulfide bridge connects residues Cys-182 and Cys-217. 2 N-linked (GlcNAc...) asparagine glycosylation sites follow: Asn-184 and Asn-200. Ala-233 is lipidated: GPI-anchor amidated alanine. A propeptide spans Ser-234–Gly-256 (removed in mature form).

The protein belongs to the prion family. As to quaternary structure, monomer and homodimer. Has a tendency to aggregate into amyloid fibrils containing a cross-beta spine, formed by a steric zipper of superposed beta-strands. Soluble oligomers may represent an intermediate stage on the path to fibril formation. Copper binding may promote oligomerization. Interacts with GRB2, APP, ERI3/PRNPIP and SYN1. Mislocalized cytosolically exposed PrP interacts with MGRN1; this interaction alters MGRN1 subcellular location and causes lysosomal enlargement. Interacts with KIAA1191.

It is found in the cell membrane. The protein resides in the golgi apparatus. Functionally, its primary physiological function is unclear. Has cytoprotective activity against internal or environmental stresses. May play a role in neuronal development and synaptic plasticity. May be required for neuronal myelin sheath maintenance. May play a role in iron uptake and iron homeostasis. Soluble oligomers are toxic to cultured neuroblastoma cells and induce apoptosis (in vitro). Association with GPC1 (via its heparan sulfate chains) targets PRNP to lipid rafts. Also provides Cu(2+) or Zn(2+) for the ascorbate-mediated GPC1 deaminase degradation of its heparan sulfate side chains. This Cervus elaphus (Red deer) protein is Major prion protein (PRNP).